The chain runs to 310 residues: Pantoate--beta-alanine ligase (310 aa).

32-39 (MGYLHEGH) serves as a coordination point for ATP. His-39 acts as the Proton donor in catalysis. Gln-63 provides a ligand contact to (R)-pantoate. Position 63 (Gln-63) interacts with beta-alanine. 175–178 (GKKD) provides a ligand contact to ATP. (R)-pantoate is bound at residue Gln-181. An ATP-binding site is contributed by 212-215 (MSSR).

Belongs to the pantothenate synthetase family. In terms of assembly, homodimer. Expressed in roots, cotyledons, leaves, stems, cauline leaves, stigma, sepals and petals.

Its subcellular location is the cytoplasm. It is found in the cytosol. It catalyses the reaction (R)-pantoate + beta-alanine + ATP = (R)-pantothenate + AMP + diphosphate + H(+). It participates in cofactor biosynthesis; (R)-pantothenate biosynthesis; (R)-pantothenate from (R)-pantoate and beta-alanine: step 1/1. With respect to regulation, enzyme kinetics do not match Michaelis-Menten kinetics, suggesting allosteric behavior. Inhibited by high pantoate levels. In terms of biological role, catalyzes the condensation of pantoate with beta-alanine to form pantothenate. Essential for panthotenate biosynthesis. This is Pantoate--beta-alanine ligase from Arabidopsis thaliana (Mouse-ear cress).